The sequence spans 244 residues: Lymphotoxin-beta (244 aa).

Over 1-18 (MGALGLEGRGGRLQGRGS) the chain is Cytoplasmic. A helical; Signal-anchor for type II membrane protein transmembrane segment spans residues 19–48 (LLLAVAGATSLVTLLLAVPITVLAVLALVP). Residues 49–244 (QDQGGLVTET…KTFFGAVMVG (196 aa)) lie on the Extracellular side of the membrane. Residues 88-243 (PAAHLIGAPL…GKTFFGAVMV (156 aa)) form the THD domain. Asn-222 carries N-linked (GlcNAc...) asparagine glycosylation.

This sequence belongs to the tumor necrosis factor family. In terms of assembly, heterotrimer of either two LTB and one LTA subunits or (less prevalent) two LTA and one LTB subunits.

It localises to the membrane. Cytokine that binds to LTBR/TNFRSF3. May play a specific role in immune response regulation. Provides the membrane anchor for the attachment of the heterotrimeric complex to the cell surface. The protein is Lymphotoxin-beta (LTB) of Pan troglodytes (Chimpanzee).